The following is a 390-amino-acid chain: Flavohemoprotein (390 aa).

At serine 2 the chain carries N-acetylserine. Residues proline 12–alanine 149 form the Globin domain. Histidine 96 contacts heme b. Residues tyrosine 106 and glutamate 148 each act as charge relay system in the active site. A reductase region spans residues tryptophan 157–cysteine 390. The FAD-binding FR-type domain occupies glutamate 158–aspartate 263. FAD contacts are provided by residues tyrosine 196 and arginine 214–serine 217. NADP(+) is bound at residue glycine 277–proline 282. Phenylalanine 382–proline 385 is an FAD binding site.

Belongs to the globin family. Two-domain flavohemoproteins subfamily. This sequence in the C-terminal section; belongs to the flavoprotein pyridine nucleotide cytochrome reductase family. The cofactor is FAD. Requires heme b as cofactor.

It is found in the cytoplasm. The catalysed reaction is 2 nitric oxide + NADPH + 2 O2 = 2 nitrate + NADP(+) + H(+). It catalyses the reaction 2 nitric oxide + NADH + 2 O2 = 2 nitrate + NAD(+) + H(+). Functionally, is involved in NO detoxification in an aerobic process, termed nitric oxide dioxygenase (NOD) reaction that utilizes O(2) and NAD(P)H to convert NO to nitrate, which protects the fungus from various noxious nitrogen compounds. Therefore, plays a central role in the inducible response to nitrosative stress. In the presence of oxygen and NADH, it has NADH oxidase activity, which leads to the generation of superoxide and H(2)O(2). Under anaerobic conditions, it also exhibits nitric oxide reductase and FAD reductase activities. However, all these reactions are much lower than NOD activity. The protein is Flavohemoprotein of Candida norvegensis (Yeast).